A 714-amino-acid chain; its full sequence is Ribonucleoside-diphosphate reductase 2 subunit alpha (714 aa).

Substrate is bound by residues Thr-161, 177–178 (SC), Gly-206, 386–390 (NLCSE), and 588–592 (PTGSI). Cys-178 and Cys-415 are joined by a disulfide. Asn-386 (proton acceptor) is an active-site residue. Cys-388 acts as the Cysteine radical intermediate in catalysis. Glu-390 functions as the Proton acceptor in the catalytic mechanism.

The protein belongs to the ribonucleoside diphosphate reductase large chain family. Tetramer of two alpha and two beta subunits.

The catalysed reaction is a 2'-deoxyribonucleoside 5'-diphosphate + [thioredoxin]-disulfide + H2O = a ribonucleoside 5'-diphosphate + [thioredoxin]-dithiol. With respect to regulation, under complex allosteric control mediated by deoxynucleoside triphosphates and ATP binding. The type of nucleotide bound at the specificity site determines substrate preference. It seems probable that ATP makes the enzyme reduce CDP and UDP, dGTP favors ADP reduction and dTTP favors GDP reduction. Functionally, provides the precursors necessary for DNA synthesis. Catalyzes the biosynthesis of deoxyribonucleotides from the corresponding ribonucleotides. R1E contains the binding sites for both substrates and allosteric effectors and carries out the actual reduction of the ribonucleotide. The chain is Ribonucleoside-diphosphate reductase 2 subunit alpha (nrdE) from Escherichia coli (strain K12).